Reading from the N-terminus, the 81-residue chain is Large ribosomal subunit protein bL31B (81 aa).

It belongs to the bacterial ribosomal protein bL31 family. Type B subfamily. As to quaternary structure, part of the 50S ribosomal subunit.

This is Large ribosomal subunit protein bL31B from Bacillus licheniformis (strain ATCC 14580 / DSM 13 / JCM 2505 / CCUG 7422 / NBRC 12200 / NCIMB 9375 / NCTC 10341 / NRRL NRS-1264 / Gibson 46).